We begin with the raw amino-acid sequence, 281 residues long: Ras-related protein Rab-40C (281 aa).

Ser-23, Gly-26, Lys-27, and Ser-46 together coordinate GTP. Residues 41-49 (SPYAYSNGI) are switch-I. Mg(2+)-binding residues include Ser-46 and Asp-69. GTP contacts are provided by Gly-72, Asn-126, and Arg-127. Residues 72 to 88 (GQGRFCTIFRSYSRGAQ) are switch-II. Residues 175–228 (LMRHGMEKIWRPNRVFSLQDLCCRAIVSCTPVHLIDKLPLPVTIKSHLKSFSMA) enclose the SOCS box domain. A disordered region spans residues 245 to 281 (SGAGGSGSKGNSLKRSKSIRPPQSPPQNCSRSNCKIS). Over residues 270–281 (PQNCSRSNCKIS) the composition is skewed to polar residues. Cys-273 carries S-palmitoyl cysteine lipidation. Cys-278 carries S-geranylgeranyl cysteine lipidation.

It belongs to the small GTPase superfamily. Rab family. As to quaternary structure, component of the cullin-5-RING E3 ubiquitin-protein ligase complex (ECS(RAB40C) complex) composed of CUL5, Elongin BC (ELOB and ELOC), RNF7/RBX2 and RAB40C. Interacts with protein phosphatase 6 (PP6) complex components ANKRD28, ANKRD52, PPP6C, PP6R1 and PP6R2; the interaction leads to ANKRD28 ubiquitination and decreased PP6 activity. Interacts with DAB2IP; DAB2IP acts as a GAP for RAB40C. Mg(2+) serves as cofactor.

It is found in the cell membrane. Its subcellular location is the cytoplasm. The protein localises to the cytosol. It localises to the golgi apparatus membrane. It carries out the reaction GTP + H2O = GDP + phosphate + H(+). It participates in protein modification; protein ubiquitination. Regulated by guanine nucleotide exchange factors (GEFs) which promote the exchange of bound GDP for free GTP. Regulated by GTPase activating proteins (GAPs) including DAB2IP, which increase the GTP hydrolysis activity. Inhibited by GDP dissociation inhibitors (GDIs). Its function is as follows. RAB40C small GTPase acts as substrate-recognition component of the ECS(RAB40C) E3 ubiquitin ligase complex which mediates the ubiquitination and subsequent proteasomal degradation of target proteins. The Rab40 subfamily belongs to the Rab family that are key regulators of intracellular membrane trafficking, from the formation of transport vesicles to their fusion with membranes. Rabs cycle between an inactive GDP-bound form and an active GTP-bound form that is able to recruit to membranes different sets of downstream effectors directly responsible for vesicle formation, movement, tethering and fusion. As part of the ECS(RAB40C) complex, mediates ANKRD28 ubiquitination and degradation, thereby inhibiting protein phosphatase 6 (PP6) complex activity and focal adhesion assembly during cell migration. Also negatively regulate lipid droplets accumulation in a GTP-dependent manner. The sequence is that of Ras-related protein Rab-40C from Mus musculus (Mouse).